Here is a 192-residue protein sequence, read N- to C-terminus: Iodate reductase subunit IdrB (192 aa).

A signal peptide (tat-type signal) is located at residues 1-52 (MSENIIPVRAVPAHDHEHDGERACMSRRRFLLFGGTSVALLSIASLPGVAQV). The Rieske domain occupies 102 to 173 (GADKDIVAFN…LEVQGDDIYA (72 aa)). Residues Cys114, His116, Cys135, and His138 each contribute to the [2Fe-2S] cluster site.

Belongs to the AOX family. In terms of assembly, the iodate reductase (Idr) complex is composed of a molybdopterin-dependent iodate reductase (IdrA and IdrB subunits) and two associated peroxidases (IdrP1 and IdrP2). Requires [2Fe-2S] cluster as cofactor. Predicted to be exported by the Tat system. The position of the signal peptide cleavage has not been experimentally proven.

The protein localises to the periplasm. Involved in iodate respiration. Probably catalyzes the reduction of iodate (IO(3)(-)) to hypoiodous acid (HIO) and H(2)O(2), using a reduced cytochrome c as the electron donor. This is Iodate reductase subunit IdrB from Pseudomonas sp. (strain SCT).